The primary structure comprises 1187 residues: Tyrosine-protein phosphatase non-receptor type 14 (1187 aa).

The FERM domain occupies 21 to 306 (FVTRIRLLDS…TRHKFYKQNK (286 aa)). A phosphoserine mark is found at Ser314, Ser461, and Ser486. Residues 510–524 (LVSPSDQRNPKNNVV) show a composition bias toward polar residues. Residues 510-531 (LVSPSDQRNPKNNVVPSKPGAS) form a disordered region. Phosphoserine is present on residues Ser591, Ser593, Ser594, and Ser642. Disordered stretches follow at residues 671–690 (LREQ…PQLP) and 787–824 (KAIS…KKEP). Positions 815 to 824 (SVKERVKKEP) are enriched in basic and acidic residues. Ser831 carries the post-translational modification Phosphoserine. The region spanning 909–1180 (VFTEYEQIPK…KFVYQVLIQF (272 aa)) is the Tyrosine-protein phosphatase domain. Substrate-binding positions include Asp1079, 1121–1127 (CSAGVGR), and Gln1165. The Phosphocysteine intermediate role is filled by Cys1121.

This sequence belongs to the protein-tyrosine phosphatase family. Non-receptor class subfamily. In terms of assembly, interacts with FLT4; the interaction is enhanced by stimulation with VEGFC. Interacts (via PPxY motifs) with YAP1 (via WW domains); this interaction leads to the cytoplasmic sequestration of YAP1 and inhibits its transcriptional co-activator activity. Ubiquitinated by the ECS (Elongin BC-CUL2/5-SOCS-box protein)/LRR1 E3 ligase complex and subsequently targeted to proteasomal degradation. Ubiquitous.

The protein resides in the cytoplasm. Its subcellular location is the cytoskeleton. It is found in the nucleus. It catalyses the reaction O-phospho-L-tyrosyl-[protein] + H2O = L-tyrosyl-[protein] + phosphate. In terms of biological role, protein tyrosine phosphatase which may play a role in the regulation of lymphangiogenesis, cell-cell adhesion, cell-matrix adhesion, cell migration, cell growth and also regulates TGF-beta gene expression, thereby modulating epithelial-mesenchymal transition. Mediates beta-catenin dephosphorylation at adhesion junctions. Acts as a negative regulator of the oncogenic property of YAP, a downstream target of the hippo pathway, in a cell density-dependent manner. May function as a tumor suppressor. This is Tyrosine-protein phosphatase non-receptor type 14 (PTPN14) from Homo sapiens (Human).